Consider the following 123-residue polypeptide: Small ribosomal subunit protein uS13 (123 aa).

A compositionally biased stretch (basic residues) spans 99-113 (RGQRTHTNARTRKGG). A disordered region spans residues 99-123 (RGQRTHTNARTRKGGSRLAVAAKKK).

This sequence belongs to the universal ribosomal protein uS13 family. Part of the 30S ribosomal subunit. Forms a loose heterodimer with protein S19. Forms two bridges to the 50S subunit in the 70S ribosome.

Located at the top of the head of the 30S subunit, it contacts several helices of the 16S rRNA. In the 70S ribosome it contacts the 23S rRNA (bridge B1a) and protein L5 of the 50S subunit (bridge B1b), connecting the 2 subunits; these bridges are implicated in subunit movement. Contacts the tRNAs in the A and P-sites. This chain is Small ribosomal subunit protein uS13, found in Anaplasma phagocytophilum (strain HZ).